Here is a 73-residue protein sequence, read N- to C-terminus: UPF0435 protein Lm4b_01721 (73 aa).

It belongs to the UPF0435 family.

The polypeptide is UPF0435 protein Lm4b_01721 (Listeria monocytogenes serotype 4b (strain CLIP80459)).